Here is a 452-residue protein sequence, read N- to C-terminus: UPF0210 protein Ccel_1722 (452 aa).

This sequence belongs to the UPF0210 family. In terms of assembly, homodimer.

The protein is UPF0210 protein Ccel_1722 of Ruminiclostridium cellulolyticum (strain ATCC 35319 / DSM 5812 / JCM 6584 / H10) (Clostridium cellulolyticum).